A 444-amino-acid chain; its full sequence is Phosphoglucosamine mutase (444 aa).

The active-site Phosphoserine intermediate is the Ser-102. Residues Ser-102, Asp-241, Asp-243, and Asp-245 each contribute to the Mg(2+) site. Phosphoserine is present on Ser-102.

The protein belongs to the phosphohexose mutase family. It depends on Mg(2+) as a cofactor. Post-translationally, activated by phosphorylation.

It carries out the reaction alpha-D-glucosamine 1-phosphate = D-glucosamine 6-phosphate. Functionally, catalyzes the conversion of glucosamine-6-phosphate to glucosamine-1-phosphate. This chain is Phosphoglucosamine mutase, found in Actinobacillus succinogenes (strain ATCC 55618 / DSM 22257 / CCUG 43843 / 130Z).